The chain runs to 378 residues: D-alanine--D-alanine ligase (378 aa).

One can recognise an ATP-grasp domain in the interval 157-368 (KVVFESAGLS…YGDLIDELIH (212 aa)). 189–244 (VDKLGFPVFVKPARAGSSMGISKVDSMEGLDAAIDEARRHDLKLVIEAGIVGREIE) contributes to the ATP binding site. Mg(2+) is bound by residues Asp-322, Glu-335, and Asn-337.

It belongs to the D-alanine--D-alanine ligase family. The cofactor is Mg(2+). Requires Mn(2+) as cofactor.

Its subcellular location is the cytoplasm. The catalysed reaction is 2 D-alanine + ATP = D-alanyl-D-alanine + ADP + phosphate + H(+). It functions in the pathway cell wall biogenesis; peptidoglycan biosynthesis. In terms of biological role, cell wall formation. This chain is D-alanine--D-alanine ligase, found in Paenarthrobacter aurescens (strain TC1).